The chain runs to 182 residues: tRNA-splicing endonuclease (182 aa).

Active-site residues include tyrosine 119, histidine 127, and lysine 158.

This sequence belongs to the tRNA-intron endonuclease family. Archaeal short subfamily. In terms of assembly, homotetramer; although the tetramer contains four active sites, only two participate in the cleavage. Therefore, it should be considered as a dimer of dimers.

The catalysed reaction is pretRNA = a 3'-half-tRNA molecule with a 5'-OH end + a 5'-half-tRNA molecule with a 2',3'-cyclic phosphate end + an intron with a 2',3'-cyclic phosphate and a 5'-hydroxyl terminus.. In terms of biological role, endonuclease that removes tRNA introns. Cleaves pre-tRNA at the 5'- and 3'-splice sites to release the intron. The products are an intron and two tRNA half-molecules bearing 2',3' cyclic phosphate and 5'-OH termini. Recognizes a pseudosymmetric substrate in which 2 bulged loops of 3 bases are separated by a stem of 4 bp. In Saccharolobus solfataricus (strain ATCC 35092 / DSM 1617 / JCM 11322 / P2) (Sulfolobus solfataricus), this protein is tRNA-splicing endonuclease.